Reading from the N-terminus, the 1177-residue chain is Zinc finger CCCH domain-containing protein 6 (1177 aa).

Residues 1-12 are compositionally biased toward basic and acidic residues; that stretch reads MTDSEHAGHDRE. Disordered stretches follow at residues 1 to 137 and 179 to 206; these read MTDS…SKEY and QESS…TEYR. Residues 13–31 are compositionally biased toward acidic residues; that stretch reads DGELEDGEIDDAGFEETQD. A coiled-coil region spans residues 27–73; the sequence is EETQDQEAKENEKQKNEKAYRKSRKKHKKEREKKKSKRRKHEKHKHN. Positions 32-46 are enriched in basic and acidic residues; sequence QEAKENEKQKNEKAY. Residues 47–73 are compositionally biased toward basic residues; the sequence is RKSRKKHKKEREKKKSKRRKHEKHKHN. A compositionally biased stretch (low complexity) spans 179–188; sequence QESSGSSFSK. 3 consecutive C3H1-type zinc fingers follow at residues 271–297, 299–326, and 327–350; these read KGKQ…HDAE, EKKK…HSEF, and PCKF…HDDL. Residues 347-383 adopt a coiled-coil conformation; it reads HDDLTKETRKLLDKVLNADEELVNEDERELEELRKRG. 8 disordered regions span residues 383-416, 446-587, 622-654, 670-767, 780-826, 942-988, 1043-1101, and 1132-1162; these read GITP…FETD, PPAF…ESMQ, QQQP…SASG, RYQE…KKPH, PKKL…SERE, EQSG…SSRS, DPRD…PVDG, and LLRP…DKPL. The segment covering 493 to 502 has biased composition (low complexity); sequence HPGSPGHHPC. Composition is skewed to polar residues over residues 512–522 and 564–587; these read ENPSLLPSSSE and SSPA…ESMQ. Residues 713–728 are compositionally biased toward polar residues; the sequence is RTLQKQTGTLRNQQLP. Residues 753–767 are compositionally biased toward basic and acidic residues; the sequence is PRLRTVPRQDIKKPH. The span at 955–967 shows a compositional bias: basic and acidic residues; sequence GDPRLQKNFDPRL. Composition is skewed to polar residues over residues 1050–1064 and 1077–1093; these read LSAT…GENT and KNQP…NTTA. Ser1150 carries the post-translational modification Phosphoserine.

In Mus musculus (Mouse), this protein is Zinc finger CCCH domain-containing protein 6 (Zc3h6).